The following is a 300-amino-acid chain: N-acetylmuramic acid 6-phosphate etherase (300 aa).

In terms of domain architecture, SIS spans 57–220 (VAAALRAGGR…STGAMIRIGK (164 aa)). The Proton donor role is filled by E85. Residue E116 is part of the active site.

Belongs to the GCKR-like family. MurNAc-6-P etherase subfamily. As to quaternary structure, homodimer.

It catalyses the reaction N-acetyl-D-muramate 6-phosphate + H2O = N-acetyl-D-glucosamine 6-phosphate + (R)-lactate. The protein operates within amino-sugar metabolism; 1,6-anhydro-N-acetylmuramate degradation. Its pathway is amino-sugar metabolism; N-acetylmuramate degradation. It participates in cell wall biogenesis; peptidoglycan recycling. Specifically catalyzes the cleavage of the D-lactyl ether substituent of MurNAc 6-phosphate, producing GlcNAc 6-phosphate and D-lactate. Together with AnmK, is also required for the utilization of anhydro-N-acetylmuramic acid (anhMurNAc) either imported from the medium or derived from its own cell wall murein, and thus plays a role in cell wall recycling. The polypeptide is N-acetylmuramic acid 6-phosphate etherase (Klebsiella aerogenes (Enterobacter aerogenes)).